The chain runs to 74 residues: Small ribosomal subunit protein bS21 (74 aa).

Belongs to the bacterial ribosomal protein bS21 family.

This chain is Small ribosomal subunit protein bS21, found in Coxiella burnetii (strain Dugway 5J108-111).